The primary structure comprises 282 residues: Pantothenate synthetase (282 aa).

Residue Met30 to His37 participates in ATP binding. His37 functions as the Proton donor in the catalytic mechanism. Residue Gln61 coordinates (R)-pantoate. Gln61 contributes to the beta-alanine binding site. An ATP-binding site is contributed by Gly148–Asp151. Gln154 lines the (R)-pantoate pocket. ATP contacts are provided by residues Val177 and Leu185–Arg188.

It belongs to the pantothenate synthetase family. Homodimer.

The protein localises to the cytoplasm. The catalysed reaction is (R)-pantoate + beta-alanine + ATP = (R)-pantothenate + AMP + diphosphate + H(+). Its pathway is cofactor biosynthesis; (R)-pantothenate biosynthesis; (R)-pantothenate from (R)-pantoate and beta-alanine: step 1/1. Functionally, catalyzes the condensation of pantoate with beta-alanine in an ATP-dependent reaction via a pantoyl-adenylate intermediate. The polypeptide is Pantothenate synthetase (Acinetobacter baumannii (strain AB0057)).